A 358-amino-acid polypeptide reads, in one-letter code: Photosystem II protein D1 2 (358 aa).

Helical transmembrane passes span Tyr-28–Ile-45, His-117–Leu-132, and Trp-141–Val-155. His-117 contacts chlorophyll a. Pheophytin a is bound at residue Tyr-125. Residues Asp-169 and Glu-188 each coordinate [CaMn4O5] cluster. A helical transmembrane segment spans residues Phe-196 to Leu-217. His-197 contacts chlorophyll a. A quinone is bound by residues His-214 and Ser-263–Phe-264. Residue His-214 coordinates Fe cation. His-271 provides a ligand contact to Fe cation. The helical transmembrane segment at Phe-273–Met-287 threads the bilayer. Residues His-331, Glu-332, Asp-341, and Ala-343 each contribute to the [CaMn4O5] cluster site. A propeptide spanning residues Thr-344 to Gly-358 is cleaved from the precursor.

Belongs to the reaction center PufL/M/PsbA/D family. As to quaternary structure, PSII is composed of 1 copy each of membrane proteins PsbA, PsbB, PsbC, PsbD, PsbE, PsbF, PsbH, PsbI, PsbJ, PsbK, PsbL, PsbM, PsbT, PsbX, PsbY, PsbZ, Psb30/Ycf12, peripheral proteins PsbO, CyanoQ (PsbQ), PsbU, PsbV and a large number of cofactors. It forms dimeric complexes. It depends on The D1/D2 heterodimer binds P680, chlorophylls that are the primary electron donor of PSII, and subsequent electron acceptors. It shares a non-heme iron and each subunit binds pheophytin, quinone, additional chlorophylls, carotenoids and lipids. D1 provides most of the ligands for the Mn4-Ca-O5 cluster of the oxygen-evolving complex (OEC). There is also a Cl(-1) ion associated with D1 and D2, which is required for oxygen evolution. The PSII complex binds additional chlorophylls, carotenoids and specific lipids. as a cofactor. Post-translationally, tyr-160 forms a radical intermediate that is referred to as redox-active TyrZ, YZ or Y-Z. In terms of processing, C-terminally processed by CtpA; processing is essential to allow assembly of the oxygen-evolving complex and thus photosynthetic growth.

It is found in the cellular thylakoid membrane. The enzyme catalyses 2 a plastoquinone + 4 hnu + 2 H2O = 2 a plastoquinol + O2. Photosystem II (PSII) is a light-driven water:plastoquinone oxidoreductase that uses light energy to abstract electrons from H(2)O, generating O(2) and a proton gradient subsequently used for ATP formation. It consists of a core antenna complex that captures photons, and an electron transfer chain that converts photonic excitation into a charge separation. The D1/D2 (PsbA/PsbD) reaction center heterodimer binds P680, the primary electron donor of PSII as well as several subsequent electron acceptors. This chain is Photosystem II protein D1 2, found in Synechococcus sp. (strain RCC307).